We begin with the raw amino-acid sequence, 440 residues long: Chromosome partition protein MukF (440 aa).

Positions 208–236 (LSETSGTLRELQDTLEAAGDKLQANLLRI) are leucine-zipper.

This sequence belongs to the MukF family. In terms of assembly, interacts, and probably forms a ternary complex, with MukE and MukB via its C-terminal region. The complex formation is stimulated by calcium or magnesium. It is required for an interaction between MukE and MukB.

The protein localises to the cytoplasm. It localises to the nucleoid. Involved in chromosome condensation, segregation and cell cycle progression. May participate in facilitating chromosome segregation by condensation DNA from both sides of a centrally located replisome during cell division. Not required for mini-F plasmid partitioning. Probably acts via its interaction with MukB and MukE. Overexpression results in anucleate cells. It has a calcium binding activity. This chain is Chromosome partition protein MukF, found in Shigella boydii serotype 18 (strain CDC 3083-94 / BS512).